The following is a 247-amino-acid chain: 3-oxoacyl-[acyl-carrier-protein] reductase FabG (247 aa).

Residues 12 to 15 (GASR), T37, 62 to 63 (DV), and N89 contribute to the NADP(+) site. S141 lines the substrate pocket. Y154 serves as the catalytic Proton acceptor. NADP(+) is bound by residues 154–158 (YAAAK) and I187.

Belongs to the short-chain dehydrogenases/reductases (SDR) family. Homotetramer.

The enzyme catalyses a (3R)-hydroxyacyl-[ACP] + NADP(+) = a 3-oxoacyl-[ACP] + NADPH + H(+). The protein operates within lipid metabolism; fatty acid biosynthesis. Functionally, catalyzes the NADPH-dependent reduction of beta-ketoacyl-ACP substrates to beta-hydroxyacyl-ACP products, the first reductive step in the elongation cycle of fatty acid biosynthesis. This is 3-oxoacyl-[acyl-carrier-protein] reductase FabG (fabG) from Pseudomonas aeruginosa (strain ATCC 15692 / DSM 22644 / CIP 104116 / JCM 14847 / LMG 12228 / 1C / PRS 101 / PAO1).